Consider the following 355-residue polypeptide: Isocitrate dehydrogenase [NAD] subunit gamma, mitochondrial (355 aa).

Residue I1 is a transit peptide, mitochondrion. Citrate is bound by residues T82 and N95. Substrate contacts are provided by R98, R129, and D216. A Mn(2+)-binding site is contributed by D216. ADP contacts are provided by N274, T275, and N286.

Belongs to the isocitrate and isopropylmalate dehydrogenases family. Heterooligomer of subunits alpha (IDH3A), beta (IDH3B), and gamma (IDH3G) in the apparent ratio of 2:1:1. The heterodimer containing one IDH3A and one IDH3B subunit and the heterodimer containing one IDH3A and one IDH3G subunit assemble into a heterotetramer (which contains two subunits of IDH3A, one of IDH3B and one of IDH3G) and further into the heterooctamer. Mg(2+) serves as cofactor. The cofactor is Mn(2+).

The protein resides in the mitochondrion. With respect to regulation, the heterotetramer and the heterodimer composed of IDH3A and IDH3G subunits can be allosterically activated by citrate (CIT) or/and ADP, and the two activators can act independently or synergistically. The heterodimer composed of IDH3A and IDH3B subunits cannot be allosterically regulated and the allosteric regulation of the heterotetramer is through the IDH3G subunit and not the IDH3B subunit. The IDH3G subunit contains the allosteric site which consists of a CIT-binding site and an ADP-binding site, and the binding of CIT and ADP causes conformational changes at the allosteric site which are transmitted to the active site in the catalytic subunit (IDH3A) through a cascade of conformational changes at the heterodimer interface, leading to stabilization of the isocitrate-binding at the active site and thus activation of the enzyme. ATP can activate the heterotetramer and the heterodimer composed of IDH3A and IDH3G subunits at low concentrations but inhibits their activities at high concentrations, whereas ATP exhibits only inhibitory effect on the heterodimer composed of IDH3A and IDH3B subunits. In terms of biological role, regulatory subunit which plays a role in the allosteric regulation of the enzyme catalyzing the decarboxylation of isocitrate (ICT) into alpha-ketoglutarate. The heterodimer composed of the alpha (IDH3A) and beta (IDH3B) subunits and the heterodimer composed of the alpha (IDH3A) and gamma (IDH3G) subunits, have considerable basal activity but the full activity of the heterotetramer (containing two subunits of IDH3A, one of IDH3B and one of IDH3G) requires the assembly and cooperative function of both heterodimers. The protein is Isocitrate dehydrogenase [NAD] subunit gamma, mitochondrial (IDH3G) of Macaca fascicularis (Crab-eating macaque).